We begin with the raw amino-acid sequence, 256 residues long: Thiazole synthase (256 aa).

Catalysis depends on lysine 96, which acts as the Schiff-base intermediate with DXP. Residues glycine 157, 183–184 (AG), and 205–206 (NT) contribute to the 1-deoxy-D-xylulose 5-phosphate site.

It belongs to the ThiG family. As to quaternary structure, homotetramer. Forms heterodimers with either ThiH or ThiS.

The protein resides in the cytoplasm. It carries out the reaction [ThiS sulfur-carrier protein]-C-terminal-Gly-aminoethanethioate + 2-iminoacetate + 1-deoxy-D-xylulose 5-phosphate = [ThiS sulfur-carrier protein]-C-terminal Gly-Gly + 2-[(2R,5Z)-2-carboxy-4-methylthiazol-5(2H)-ylidene]ethyl phosphate + 2 H2O + H(+). The protein operates within cofactor biosynthesis; thiamine diphosphate biosynthesis. In terms of biological role, catalyzes the rearrangement of 1-deoxy-D-xylulose 5-phosphate (DXP) to produce the thiazole phosphate moiety of thiamine. Sulfur is provided by the thiocarboxylate moiety of the carrier protein ThiS. In vitro, sulfur can be provided by H(2)S. This is Thiazole synthase from Clostridium beijerinckii (strain ATCC 51743 / NCIMB 8052) (Clostridium acetobutylicum).